The following is a 420-amino-acid chain: UDP-N-acetylglucosamine 1-carboxyvinyltransferase (420 aa).

22 to 23 (KN) lines the phosphoenolpyruvate pocket. R91 serves as a coordination point for UDP-N-acetyl-alpha-D-glucosamine. The active-site Proton donor is the C115. C115 is modified (2-(S-cysteinyl)pyruvic acid O-phosphothioketal). Residues 120-124 (RPVDL), 160-163 (KVSV), D305, and I327 contribute to the UDP-N-acetyl-alpha-D-glucosamine site.

The protein belongs to the EPSP synthase family. MurA subfamily.

The protein resides in the cytoplasm. The enzyme catalyses phosphoenolpyruvate + UDP-N-acetyl-alpha-D-glucosamine = UDP-N-acetyl-3-O-(1-carboxyvinyl)-alpha-D-glucosamine + phosphate. The protein operates within cell wall biogenesis; peptidoglycan biosynthesis. In terms of biological role, cell wall formation. Adds enolpyruvyl to UDP-N-acetylglucosamine. The chain is UDP-N-acetylglucosamine 1-carboxyvinyltransferase from Pectobacterium atrosepticum (strain SCRI 1043 / ATCC BAA-672) (Erwinia carotovora subsp. atroseptica).